A 227-amino-acid chain; its full sequence is Cytochrome c oxidase subunit 2 (227 aa).

Residues 1–14 lie on the Mitochondrial intermembrane side of the membrane; the sequence is MAYPFQLGLQDATS. A helical membrane pass occupies residues 15–45; that stretch reads PIMEELTNFHDHTLMIVFLISSLVLYLISLM. Topologically, residues 46 to 59 are mitochondrial matrix; it reads LTTKLIHTNTMDAQ. Residues 60–87 traverse the membrane as a helical segment; that stretch reads EVETVWTILPAIILIMIALPSLRILYLM. Topologically, residues 88 to 227 are mitochondrial intermembrane; it reads DEINNPVLTV…LFENWSTSMI (140 aa). Positions 161, 196, 198, 200, 204, and 207 each coordinate Cu cation. Glutamate 198 contacts Mg(2+).

It belongs to the cytochrome c oxidase subunit 2 family. As to quaternary structure, component of the cytochrome c oxidase (complex IV, CIV), a multisubunit enzyme composed of 14 subunits. The complex is composed of a catalytic core of 3 subunits MT-CO1, MT-CO2 and MT-CO3, encoded in the mitochondrial DNA, and 11 supernumerary subunits COX4I, COX5A, COX5B, COX6A, COX6B, COX6C, COX7A, COX7B, COX7C, COX8 and NDUFA4, which are encoded in the nuclear genome. The complex exists as a monomer or a dimer and forms supercomplexes (SCs) in the inner mitochondrial membrane with NADH-ubiquinone oxidoreductase (complex I, CI) and ubiquinol-cytochrome c oxidoreductase (cytochrome b-c1 complex, complex III, CIII), resulting in different assemblies (supercomplex SCI(1)III(2)IV(1) and megacomplex MCI(2)III(2)IV(2)). Found in a complex with TMEM177, COA6, COX18, COX20, SCO1 and SCO2. Interacts with TMEM177 in a COX20-dependent manner. Interacts with COX20. Interacts with COX16. Requires Cu cation as cofactor.

The protein localises to the mitochondrion inner membrane. The enzyme catalyses 4 Fe(II)-[cytochrome c] + O2 + 8 H(+)(in) = 4 Fe(III)-[cytochrome c] + 2 H2O + 4 H(+)(out). In terms of biological role, component of the cytochrome c oxidase, the last enzyme in the mitochondrial electron transport chain which drives oxidative phosphorylation. The respiratory chain contains 3 multisubunit complexes succinate dehydrogenase (complex II, CII), ubiquinol-cytochrome c oxidoreductase (cytochrome b-c1 complex, complex III, CIII) and cytochrome c oxidase (complex IV, CIV), that cooperate to transfer electrons derived from NADH and succinate to molecular oxygen, creating an electrochemical gradient over the inner membrane that drives transmembrane transport and the ATP synthase. Cytochrome c oxidase is the component of the respiratory chain that catalyzes the reduction of oxygen to water. Electrons originating from reduced cytochrome c in the intermembrane space (IMS) are transferred via the dinuclear copper A center (CU(A)) of subunit 2 and heme A of subunit 1 to the active site in subunit 1, a binuclear center (BNC) formed by heme A3 and copper B (CU(B)). The BNC reduces molecular oxygen to 2 water molecules using 4 electrons from cytochrome c in the IMS and 4 protons from the mitochondrial matrix. This chain is Cytochrome c oxidase subunit 2 (MT-CO2), found in Gerbillurus vallinus (Brush-tailed hairy-footed gerbil).